The chain runs to 423 residues: Serine hydroxymethyltransferase (423 aa).

Residues L120 and 124 to 126 each bind (6S)-5,6,7,8-tetrahydrofolate; that span reads GHL. K229 is subject to N6-(pyridoxal phosphate)lysine. Residues E245 and 353 to 355 contribute to the (6S)-5,6,7,8-tetrahydrofolate site; that span reads SPF.

This sequence belongs to the SHMT family. Homodimer. Pyridoxal 5'-phosphate is required as a cofactor.

Its subcellular location is the cytoplasm. It catalyses the reaction (6R)-5,10-methylene-5,6,7,8-tetrahydrofolate + glycine + H2O = (6S)-5,6,7,8-tetrahydrofolate + L-serine. The protein operates within one-carbon metabolism; tetrahydrofolate interconversion. Its pathway is amino-acid biosynthesis; glycine biosynthesis; glycine from L-serine: step 1/1. In terms of biological role, catalyzes the reversible interconversion of serine and glycine with tetrahydrofolate (THF) serving as the one-carbon carrier. This reaction serves as the major source of one-carbon groups required for the biosynthesis of purines, thymidylate, methionine, and other important biomolecules. Also exhibits THF-independent aldolase activity toward beta-hydroxyamino acids, producing glycine and aldehydes, via a retro-aldol mechanism. This Prochlorococcus marinus (strain MIT 9312) protein is Serine hydroxymethyltransferase.